A 440-amino-acid chain; its full sequence is Ribosomal protein uS12 methylthiotransferase RimO (440 aa).

One can recognise an MTTase N-terminal domain in the interval 2 to 117 (VKVGFVSLGC…LPNVIKKLYE (116 aa)). Residues cysteine 11, cysteine 47, cysteine 80, cysteine 156, cysteine 160, and cysteine 163 each coordinate [4Fe-4S] cluster. The region spanning 142-371 (ATPKFYAYIK…LNLQRKISLE (230 aa)) is the Radical SAM core domain. The TRAM domain maps to 374 to 440 (RKRISKKYEV…FEYDLVGEVI (67 aa)).

It belongs to the methylthiotransferase family. RimO subfamily. [4Fe-4S] cluster serves as cofactor.

It is found in the cytoplasm. It catalyses the reaction L-aspartate(89)-[ribosomal protein uS12]-hydrogen + (sulfur carrier)-SH + AH2 + 2 S-adenosyl-L-methionine = 3-methylsulfanyl-L-aspartate(89)-[ribosomal protein uS12]-hydrogen + (sulfur carrier)-H + 5'-deoxyadenosine + L-methionine + A + S-adenosyl-L-homocysteine + 2 H(+). Functionally, catalyzes the methylthiolation of an aspartic acid residue of ribosomal protein uS12. In Caldicellulosiruptor saccharolyticus (strain ATCC 43494 / DSM 8903 / Tp8T 6331), this protein is Ribosomal protein uS12 methylthiotransferase RimO.